The primary structure comprises 707 residues: Methionine--tRNA ligase (707 aa).

The 'HIGH' region motif lies at 13-23; that stretch reads PYANGNFHIGH. The Zn(2+) site is built by Cys147, Cys150, Cys160, and Cys163. Residues 344–348 carry the 'KMSKS' region motif; that stretch reads KMSKS. Lys347 provides a ligand contact to ATP. Positions 601–707 constitute a tRNA-binding domain; it reads DFAKVDLRIA…PGATPGMRIH (107 aa).

This sequence belongs to the class-I aminoacyl-tRNA synthetase family. MetG type 1 subfamily. As to quaternary structure, homodimer. Zn(2+) is required as a cofactor.

It localises to the cytoplasm. It catalyses the reaction tRNA(Met) + L-methionine + ATP = L-methionyl-tRNA(Met) + AMP + diphosphate. In terms of biological role, is required not only for elongation of protein synthesis but also for the initiation of all mRNA translation through initiator tRNA(fMet) aminoacylation. The sequence is that of Methionine--tRNA ligase from Polaromonas naphthalenivorans (strain CJ2).